Consider the following 552-residue polypeptide: Ribulokinase (552 aa).

It belongs to the ribulokinase family.

It carries out the reaction D-ribulose + ATP = D-ribulose 5-phosphate + ADP + H(+). The enzyme catalyses L-ribulose + ATP = L-ribulose 5-phosphate + ADP + H(+). It functions in the pathway carbohydrate degradation; L-arabinose degradation via L-ribulose; D-xylulose 5-phosphate from L-arabinose (bacterial route): step 2/3. In Bacillus licheniformis (strain ATCC 14580 / DSM 13 / JCM 2505 / CCUG 7422 / NBRC 12200 / NCIMB 9375 / NCTC 10341 / NRRL NRS-1264 / Gibson 46), this protein is Ribulokinase.